Reading from the N-terminus, the 473-residue chain is Serine palmitoyltransferase 1 (473 aa).

The Lumenal portion of the chain corresponds to 1–15; sequence MAMAAEQWVLVEMVQ. The tract at residues 1–66 is interaction with SPTLC2; that stretch reads MAMAAEQWVL…KEELIEEWQP (66 aa). A helical transmembrane segment spans residues 16-36; the sequence is ALYEAPAYHLILEGILILWII. Topologically, residues 37–473 are cytoplasmic; the sequence is RLVFSKTYKL…IREAAQAVLL (437 aa). Tyr-164 carries the post-translational modification Phosphotyrosine; by ABL.

It belongs to the class-II pyridoxal-phosphate-dependent aminotransferase family. Component of the serine palmitoyltransferase (SPT) complex, which is also composed of SPTLC2 or SPTLC3 and SPTSSA or SPTSSB. The heterodimer with SPTLC2 or SPTLC3 forms the catalytic core of the enzyme, while SPTSSA or SPTSSB subunits determine substrate specificity. SPT also interacts with ORMDL proteins, especially ORMDL3, which negatively regulate SPT activity in the presence of ceramides. Forms dimers of heterodimers with SPTLC2. Interacts with RTN4. Pyridoxal 5'-phosphate serves as cofactor. In terms of processing, phosphorylation at Tyr-164 inhibits activity and promotes cell survival.

It is found in the endoplasmic reticulum membrane. The enzyme catalyses L-serine + hexadecanoyl-CoA + H(+) = 3-oxosphinganine + CO2 + CoA. It catalyses the reaction octadecanoyl-CoA + L-serine + H(+) = 3-oxoeicosasphinganine + CO2 + CoA. The catalysed reaction is tetradecanoyl-CoA + L-serine + H(+) = 3-oxohexadecasphinganine + CO2 + CoA. It carries out the reaction dodecanoyl-CoA + L-serine + H(+) = 3-oxotetradecasphinganine + CO2 + CoA. Its pathway is lipid metabolism; sphingolipid metabolism. With respect to regulation, SPT complex catalytic activity is negatively regulated by ORMDL proteins, including ORMDL3, in the presence of ceramides. This mechanism allows to maintain ceramide levels at sufficient concentrations for the production of complex sphingolipids, but which prevents the accumulation of ceramides to levels that trigger apoptosis. Component of the serine palmitoyltransferase multisubunit enzyme (SPT) that catalyzes the initial and rate-limiting step in sphingolipid biosynthesis by condensing L-serine and activated acyl-CoA (most commonly palmitoyl-CoA) to form long-chain bases. The SPT complex is also composed of SPTLC2 or SPTLC3 and SPTSSA or SPTSSB. Within this complex, the heterodimer with SPTLC2 or SPTLC3 forms the catalytic core. The composition of the serine palmitoyltransferase (SPT) complex determines the substrate preference. The SPTLC1-SPTLC2-SPTSSA complex shows a strong preference for C16-CoA substrate, while the SPTLC1-SPTLC3-SPTSSA isozyme uses both C14-CoA and C16-CoA as substrates, with a slight preference for C14-CoA. The SPTLC1-SPTLC2-SPTSSB complex shows a strong preference for C18-CoA substrate, while the SPTLC1-SPTLC3-SPTSSB isozyme displays an ability to use a broader range of acyl-CoAs, without apparent preference. Required for adipocyte cell viability and metabolic homeostasis. The polypeptide is Serine palmitoyltransferase 1 (SPTLC1) (Cricetulus griseus (Chinese hamster)).